A 395-amino-acid chain; its full sequence is 8-amino-7-oxononanoate synthase (395 aa).

Lysine 24 serves as a coordination point for substrate. 111–112 is a pyridoxal 5'-phosphate binding site; sequence GF. Substrate is bound at residue histidine 136. Pyridoxal 5'-phosphate is bound by residues serine 184, 209-212, and 240-243; these read DDAH and TLSK. N6-(pyridoxal phosphate)lysine is present on lysine 243. Substrate is bound at residue threonine 357.

This sequence belongs to the class-II pyridoxal-phosphate-dependent aminotransferase family. BioF subfamily. Homodimer. Requires pyridoxal 5'-phosphate as cofactor.

It carries out the reaction 6-carboxyhexanoyl-[ACP] + L-alanine + H(+) = (8S)-8-amino-7-oxononanoate + holo-[ACP] + CO2. The protein operates within cofactor biosynthesis; biotin biosynthesis. Functionally, catalyzes the decarboxylative condensation of pimeloyl-[acyl-carrier protein] and L-alanine to produce 8-amino-7-oxononanoate (AON), [acyl-carrier protein], and carbon dioxide. The sequence is that of 8-amino-7-oxononanoate synthase from Treponema denticola (strain ATCC 35405 / DSM 14222 / CIP 103919 / JCM 8153 / KCTC 15104).